We begin with the raw amino-acid sequence, 433 residues long: Pyrimidine-nucleoside phosphorylase (433 aa).

81-83 contacts phosphate; sequence KHS. Residues Gly88 and Thr90 each coordinate K(+). Phosphate is bound by residues Thr92, 108–110, and Thr120; that span reads KMS. The substrate site is built by Arg168 and Lys187. K(+)-binding residues include Leu243, Ala246, and Glu255.

Belongs to the thymidine/pyrimidine-nucleoside phosphorylase family. In terms of assembly, homodimer. It depends on K(+) as a cofactor.

It carries out the reaction uridine + phosphate = alpha-D-ribose 1-phosphate + uracil. The catalysed reaction is thymidine + phosphate = 2-deoxy-alpha-D-ribose 1-phosphate + thymine. It catalyses the reaction 2'-deoxyuridine + phosphate = 2-deoxy-alpha-D-ribose 1-phosphate + uracil. Its function is as follows. Catalyzes phosphorolysis of the pyrimidine nucleosides uridine, thymidine and 2'-deoxyuridine with the formation of the corresponding pyrimidine base and ribose-1-phosphate. The chain is Pyrimidine-nucleoside phosphorylase (pdp) from Staphylococcus aureus (strain Mu50 / ATCC 700699).